Consider the following 99-residue polypeptide: Malonate decarboxylase acyl carrier protein (99 aa).

The residue at position 25 (S25) is an O-(phosphoribosyl dephospho-coenzyme A)serine.

This sequence belongs to the MdcC family. Post-translationally, covalently binds the prosthetic group of malonate decarboxylase.

The protein localises to the cytoplasm. Its function is as follows. Subunit of malonate decarboxylase, it is an acyl carrier protein to which acetyl and malonyl thioester residues are bound via a 2'-(5''-phosphoribosyl)-3'-dephospho-CoA prosthetic group and turn over during the catalytic mechanism. This is Malonate decarboxylase acyl carrier protein from Pseudomonas aeruginosa (strain LESB58).